The following is a 94-amino-acid chain: U1-theraphotoxin-Sp1a (94 aa).

An N-terminal signal peptide occupies residues 1 to 22 (MIFLLPSIISVMLLAEPVLMLG). A propeptide spanning residues 23-58 (DTEDADLMEMVQLSRPFFNPIIRAVELVELREERQR) is cleaved from the precursor. Disulfide bonds link Cys-60/Cys-78, Cys-67/Cys-83, and Cys-77/Cys-88. Val-92 is subject to Valine amide.

Belongs to the neurotoxin 14 (magi-1) family. OAIP-1 subfamily. As to expression, expressed by the venom gland.

Its subcellular location is the secreted. Its function is as follows. Probable ion channel inhibitor. Shows insecticidal activity. Acts synergistically with the neonicotinoid insecticide imidacloprid. Is neither a repellent that repels insects nor an attractant that is preferentially consumed by insects. Is very stable. The protein is U1-theraphotoxin-Sp1a of Selenotypus plumipes (Australian featherleg tarantula).